Consider the following 283-residue polypeptide: Phenylethanolamine N-methyltransferase (283 aa).

Phosphoserine is present on Ser-7. Residues Tyr-35, Tyr-40, Gly-79–Ser-80, Tyr-85, Asp-101, Asn-106, Asp-158–Val-159, and Ala-181 each bind S-adenosyl-L-methionine. Glu-219 and Asp-267 together coordinate octopamine.

Belongs to the class I-like SAM-binding methyltransferase superfamily. NNMT/PNMT/TEMT family. In terms of processing, the N-terminus is blocked. In terms of tissue distribution, expressed in the adrenal medulla.

The enzyme catalyses phenylethanolamine + S-adenosyl-L-methionine = N-methylphenylethanolamine + S-adenosyl-L-homocysteine + H(+). It catalyses the reaction (R)-noradrenaline + S-adenosyl-L-methionine = (R)-adrenaline + S-adenosyl-L-homocysteine + H(+). It carries out the reaction (R)-normetanephrine + S-adenosyl-L-methionine = (R)-metanephrine + S-adenosyl-L-homocysteine + H(+). The catalysed reaction is (R)-octopamine + S-adenosyl-L-methionine = (R)-synephrine + S-adenosyl-L-homocysteine + H(+). It participates in catecholamine biosynthesis; (R)-adrenaline biosynthesis; (R)-adrenaline from (R)-noradrenaline: step 1/1. With respect to regulation, inhibited by p-hydroxymercuribenzoate and p-chloromercuriphenylsulfonate. Its function is as follows. Catalyzes the transmethylation of nonepinephrine (noradrenaline) to form epinephrine (adrenaline), using S-adenosyl-L-methionine as the methyl donor. Other substrates include phenylethanolamine and octopamine. Also methylates normetanephrine. The sequence is that of Phenylethanolamine N-methyltransferase (PNMT) from Bos taurus (Bovine).